A 91-amino-acid chain; its full sequence is Putative defensin-like protein 145 (91 aa).

Residues 1-26 (MNKNIIFSFTVLTLFVIFVQVTGVIG) form the signal peptide. 2 N-linked (GlcNAc...) asparagine glycosylation sites follow: asparagine 35 and asparagine 68. 4 cysteine pairs are disulfide-bonded: cysteine 39-cysteine 84, cysteine 52-cysteine 74, cysteine 57-cysteine 78, and cysteine 61-cysteine 80.

Belongs to the DEFL family.

Its subcellular location is the secreted. The sequence is that of Putative defensin-like protein 145 (LCR2) from Arabidopsis thaliana (Mouse-ear cress).